A 681-amino-acid chain; its full sequence is Methionine--tRNA ligase (681 aa).

Positions 14–24 (PYANGSIHLGH) match the 'HIGH' region motif. Residues Cys145, Cys148, Cys158, and Cys161 each coordinate Zn(2+). The 'KMSKS' region signature appears at 331–335 (KMSKS). Lys334 is a binding site for ATP. The 103-residue stretch at 579–681 (TFAAVDLRVA…SGAKPGQRIK (103 aa)) folds into the tRNA-binding domain.

It belongs to the class-I aminoacyl-tRNA synthetase family. MetG type 1 subfamily. As to quaternary structure, homodimer. Zn(2+) serves as cofactor.

The protein resides in the cytoplasm. It carries out the reaction tRNA(Met) + L-methionine + ATP = L-methionyl-tRNA(Met) + AMP + diphosphate. Its function is as follows. Is required not only for elongation of protein synthesis but also for the initiation of all mRNA translation through initiator tRNA(fMet) aminoacylation. This Pseudomonas putida (strain W619) protein is Methionine--tRNA ligase.